The primary structure comprises 490 residues: Probable glycine dehydrogenase (decarboxylating) subunit 2 (490 aa).

At K273 the chain carries N6-(pyridoxal phosphate)lysine.

Belongs to the GcvP family. C-terminal subunit subfamily. As to quaternary structure, the glycine cleavage system is composed of four proteins: P, T, L and H. In this organism, the P 'protein' is a heterodimer of two subunits. Requires pyridoxal 5'-phosphate as cofactor.

It carries out the reaction N(6)-[(R)-lipoyl]-L-lysyl-[glycine-cleavage complex H protein] + glycine + H(+) = N(6)-[(R)-S(8)-aminomethyldihydrolipoyl]-L-lysyl-[glycine-cleavage complex H protein] + CO2. The glycine cleavage system catalyzes the degradation of glycine. The P protein binds the alpha-amino group of glycine through its pyridoxal phosphate cofactor; CO(2) is released and the remaining methylamine moiety is then transferred to the lipoamide cofactor of the H protein. This Staphylococcus aureus (strain MRSA252) protein is Probable glycine dehydrogenase (decarboxylating) subunit 2.